Reading from the N-terminus, the 610-residue chain is Dihydroxy-acid dehydratase (610 aa).

D81 is a Mg(2+) binding site. Residue C122 participates in [2Fe-2S] cluster binding. The Mg(2+) site is built by D123 and K124. K124 bears the N6-carboxylysine mark. [2Fe-2S] cluster is bound at residue C193. E489 lines the Mg(2+) pocket. S515 serves as the catalytic Proton acceptor.

It belongs to the IlvD/Edd family. As to quaternary structure, homodimer. It depends on [2Fe-2S] cluster as a cofactor. The cofactor is Mg(2+).

It carries out the reaction (2R)-2,3-dihydroxy-3-methylbutanoate = 3-methyl-2-oxobutanoate + H2O. It catalyses the reaction (2R,3R)-2,3-dihydroxy-3-methylpentanoate = (S)-3-methyl-2-oxopentanoate + H2O. It functions in the pathway amino-acid biosynthesis; L-isoleucine biosynthesis; L-isoleucine from 2-oxobutanoate: step 3/4. It participates in amino-acid biosynthesis; L-valine biosynthesis; L-valine from pyruvate: step 3/4. Functionally, functions in the biosynthesis of branched-chain amino acids. Catalyzes the dehydration of (2R,3R)-2,3-dihydroxy-3-methylpentanoate (2,3-dihydroxy-3-methylvalerate) into 2-oxo-3-methylpentanoate (2-oxo-3-methylvalerate) and of (2R)-2,3-dihydroxy-3-methylbutanoate (2,3-dihydroxyisovalerate) into 2-oxo-3-methylbutanoate (2-oxoisovalerate), the penultimate precursor to L-isoleucine and L-valine, respectively. The polypeptide is Dihydroxy-acid dehydratase (Xylella fastidiosa (strain M12)).